Here is a 1356-residue protein sequence, read N- to C-terminus: DNA-directed RNA polymerase subunit beta (1356 aa).

It belongs to the RNA polymerase beta chain family. As to quaternary structure, the RNAP catalytic core consists of 2 alpha, 1 beta, 1 beta' and 1 omega subunit. When a sigma factor is associated with the core the holoenzyme is formed, which can initiate transcription.

The enzyme catalyses RNA(n) + a ribonucleoside 5'-triphosphate = RNA(n+1) + diphosphate. Functionally, DNA-dependent RNA polymerase catalyzes the transcription of DNA into RNA using the four ribonucleoside triphosphates as substrates. This chain is DNA-directed RNA polymerase subunit beta, found in Stutzerimonas stutzeri (strain A1501) (Pseudomonas stutzeri).